The following is a 69-amino-acid chain: DNA gyrase inhibitor YacG (69 aa).

Positions 14, 17, 33, and 37 each coordinate Zn(2+).

It belongs to the DNA gyrase inhibitor YacG family. Interacts with GyrB. Zn(2+) serves as cofactor.

Functionally, inhibits all the catalytic activities of DNA gyrase by preventing its interaction with DNA. Acts by binding directly to the C-terminal domain of GyrB, which probably disrupts DNA binding by the gyrase. The chain is DNA gyrase inhibitor YacG from Aliivibrio salmonicida (strain LFI1238) (Vibrio salmonicida (strain LFI1238)).